The following is a 394-amino-acid chain: Phosphopentomutase (394 aa).

Mn(2+) contacts are provided by Asp-14, Asp-287, His-292, Asp-328, His-329, and His-340.

This sequence belongs to the phosphopentomutase family. It depends on Mn(2+) as a cofactor.

Its subcellular location is the cytoplasm. The catalysed reaction is 2-deoxy-alpha-D-ribose 1-phosphate = 2-deoxy-D-ribose 5-phosphate. It carries out the reaction alpha-D-ribose 1-phosphate = D-ribose 5-phosphate. It participates in carbohydrate degradation; 2-deoxy-D-ribose 1-phosphate degradation; D-glyceraldehyde 3-phosphate and acetaldehyde from 2-deoxy-alpha-D-ribose 1-phosphate: step 1/2. Functionally, isomerase that catalyzes the conversion of deoxy-ribose 1-phosphate (dRib-1-P) and ribose 1-phosphate (Rib-1-P) to deoxy-ribose 5-phosphate (dRib-5-P) and ribose 5-phosphate (Rib-5-P), respectively. The sequence is that of Phosphopentomutase from Listeria monocytogenes serotype 4b (strain CLIP80459).